We begin with the raw amino-acid sequence, 122 residues long: Large ribosomal subunit protein uL14 (122 aa).

It belongs to the universal ribosomal protein uL14 family. Part of the 50S ribosomal subunit. Forms a cluster with proteins L3 and L19. In the 70S ribosome, L14 and L19 interact and together make contacts with the 16S rRNA in bridges B5 and B8.

In terms of biological role, binds to 23S rRNA. Forms part of two intersubunit bridges in the 70S ribosome. This is Large ribosomal subunit protein uL14 from Amoebophilus asiaticus (strain 5a2).